A 172-amino-acid polypeptide reads, in one-letter code: uncharacterized protein (172 aa).

This is an uncharacterized protein from Macaca mulatta (Rhesus macaque).